A 951-amino-acid polypeptide reads, in one-letter code: Leucine-rich repeat-containing G-protein coupled receptor 4 (951 aa).

The signal sequence occupies residues 1–19 (MPGPLGLLCFLALGLRGSA). The Extracellular portion of the chain corresponds to 20–544 (EPSGAAPPLC…LLGSWMIRLT (525 aa)). Residues 25-57 (APPLCAAPCSCDGDRRVDCSGKGLTAVPEGLSA) form the LRRNT domain. 2 disulfide bridges follow: C29-C35 and C33-C43. 11 LRR repeats span residues 35 to 58 (CDGD…LSAF), 59 to 79 (TQLL…AFKN), 81 to 103 (PFLE…ALSG), 104 to 127 (LKEL…AIRG), 128 to 151 (LSSL…SFEG), 153 to 175 (TQLR…PLSN), 176 to 199 (LPTL…AFTN), 201 to 223 (SSLV…CFDG), 224 to 247 (LDNL…IKAL), 248 to 270 (PSLK…AFDG), and 272 to 294 (PLLK…AFHN). The N-linked (GlcNAc...) asparagine glycan is linked to N68. The N-linked (GlcNAc...) asparagine glycan is linked to N199. Residues N294 and N314 are each glycosylated (N-linked (GlcNAc...) asparagine). 5 LRR repeats span residues 318–341 (TVRL…LCQE), 342–363 (QKRL…SFNG), 364–387 (CHAL…TFQG), 388–411 (LTSL…AFAK), and 413–435 (GSIT…GLNG). An intrachain disulfide couples C339 to C364. Disulfide bonds link C470–C522 and C471–C476. Residues 545–565 (VWFIFLVALFFNLLVILTTFA) traverse the membrane as a helical segment. Topologically, residues 566–575 (SCTSVPSSKL) are cytoplasmic. A helical membrane pass occupies residues 576–596 (FIGLISVSNLFMGAYTGILTF). At 597–619 (LDAVSWGRFAEFGIWWEIGSGCK) the chain is on the extracellular side. An intrachain disulfide couples C618 to C693. The chain crosses the membrane as a helical span at residues 620–640 (IAGFLAVFSSESAIFLLMLAA). Residues 641–661 (VERSLSAKDMMKNGKSNHLRQ) are Cytoplasmic-facing. A helical transmembrane segment spans residues 662 to 682 (FRIAALLAFLGAAVAGSFPLF). The Extracellular portion of the chain corresponds to 683 to 703 (HRGEYSASPLCLPFPTGETPS). The helical transmembrane segment at 704 to 724 (LGFTVTLVLLNSLAFLLMAII) threads the bilayer. At 725–756 (YTKLYCNLEKEDLSESSQSSMIKHVAWLIFTN) the chain is on the cytoplasmic side. Residues 757–777 (CIFFCPVAFFSFAPLITAVSI) traverse the membrane as a helical segment. The Extracellular portion of the chain corresponds to 778–783 (SPEIMK). Residues 784–804 (SVTLIFFPLPACLNPVLYVFF) traverse the membrane as a helical segment. The Cytoplasmic portion of the chain corresponds to 805-951 (NPKFKEDWKL…YAYNLPRVKD (147 aa)). S920 carries the phosphoserine modification.

Belongs to the G-protein coupled receptor 1 family.

It localises to the cell membrane. In terms of biological role, receptor for R-spondins that potentiates the canonical Wnt signaling pathway and is involved in the formation of various organs. Upon binding to R-spondins (RSPO1, RSPO2, RSPO3 or RSPO4), associates with phosphorylated LRP6 and frizzled receptors that are activated by extracellular Wnt receptors, triggering the canonical Wnt signaling pathway to increase expression of target genes. In contrast to classical G-protein coupled receptors, does not activate heterotrimeric G-proteins to transduce the signal. Its function as activator of the Wnt signaling pathway is required for the development of various organs, including liver, kidney, intestine, bone, reproductive tract and eye. May also act as a receptor for norrin (NDP), such results however required additional confirmation in vivo. Required during spermatogenesis to activate the Wnt signaling pathway in peritubular myoid cells. Required for the maintenance of intestinal stem cells and Paneth cell differentiation in postnatal intestinal crypts. Acts as a regulator of bone formation and remodeling. Involved in kidney development; required for maintaining the ureteric bud in an undifferentiated state. Involved in the development of the anterior segment of the eye. Required during erythropoiesis. Also acts as a negative regulator of innate immunity by inhibiting TLR2/TLR4 associated pattern-recognition and pro-inflammatory cytokine production. Plays an important role in regulating the circadian rhythms of plasma lipids, partially through regulating the rhythmic expression of MTTP. Required for proper development of GnRH neurons (gonadotropin-releasing hormone expressing neurons) that control the release of reproductive hormones from the pituitary gland. The chain is Leucine-rich repeat-containing G-protein coupled receptor 4 (LGR4) from Bos taurus (Bovine).